The following is a 471-amino-acid chain: Pachytene checkpoint protein 2 homolog (471 aa).

213-220 is a binding site for ATP; that stretch reads GPPGTGKT.

It belongs to the AAA ATPase family. PCH2 subfamily.

Plays a key role in chromosome recombination during meiosis. The protein is Pachytene checkpoint protein 2 homolog of Oryza sativa subsp. indica (Rice).